A 341-amino-acid polypeptide reads, in one-letter code: Protein CbhE (341 aa).

Acidic residues predominate over residues 287 to 297; sequence IDEENTSDSSE. A disordered region spans residues 287–341; that stretch reads IDEENTSDSSEEGTSKNRFRDTLFSNVPDSSSDSENEQEREKKELAGKTPSFRLC. Residues 323–332 are compositionally biased toward basic and acidic residues; it reads EQEREKKELA.

Its subcellular location is the cytoplasm. May be involved in the pathogenesis of acute Q fever. In Coxiella burnetii (strain RSA 493 / Nine Mile phase I), this protein is Protein CbhE (cbhE).